The following is a 568-amino-acid chain: Cytosolic purine 5'-nucleotidase (568 aa).

Catalysis depends on Asp-52, which acts as the Nucleophile. Residues Asp-52 and Asp-54 each contribute to the IMP site. Residues Asp-52 and Asp-54 each coordinate Mg(2+). The active-site Proton donor is Asp-54. ATP contacts are provided by Arg-144 and Asn-154. IMP-binding residues include Arg-202, Asp-206, Lys-215, Thr-249, Asn-250, Ser-251, and Lys-292. Asp-351 contacts Mg(2+). Residues Gln-453 and Arg-456 each coordinate ATP. The segment at Ile-528–Glu-568 is disordered. The interval His-548–Glu-568 is required for tetramer assembly. Positions Glu-550 to Glu-568 are enriched in acidic residues.

It belongs to the 5'(3')-deoxyribonucleotidase family. In terms of assembly, homotetramer. It depends on Mg(2+) as a cofactor.

The protein localises to the cytoplasm. It is found in the cytosol. The enzyme catalyses a ribonucleoside 5'-phosphate + H2O = a ribonucleoside + phosphate. It catalyses the reaction a 2'-deoxyribonucleoside + a ribonucleoside 5'-phosphate = a ribonucleoside + a 2'-deoxyribonucleoside 5'-phosphate. It carries out the reaction IMP + H2O = inosine + phosphate. The catalysed reaction is GMP + H2O = guanosine + phosphate. The enzyme catalyses dIMP + H2O = 2'-deoxyinosine + phosphate. It catalyses the reaction dGMP + H2O = 2'-deoxyguanosine + phosphate. It carries out the reaction XMP + H2O = xanthosine + phosphate. The catalysed reaction is inosine + GMP = guanosine + IMP. The enzyme catalyses dGMP + inosine = 2'-deoxyguanosine + IMP. It catalyses the reaction dIMP + inosine = 2'-deoxyinosine + IMP. It carries out the reaction inosine + UMP = uridine + IMP. The catalysed reaction is inosine + CMP = cytidine + IMP. The enzyme catalyses inosine + AMP = IMP + adenosine. Allosterically activated by various compounds including ATP, 2,3-BPG/2,3-Bisphosphoglyceric acid and Ap4A/P1,P4-bis(5'-adenosyl) tetraphosphate. Binding of an allosteric activator is a prerequisiste to magnesium and substrate binding. Inhibited by inorganic phosphate. In terms of biological role, broad specificity cytosolic 5'-nucleotidase that catalyzes the dephosphorylation of 6-hydroxypurine nucleoside 5'-monophosphates. In addition, possesses a phosphotransferase activity by which it can transfer a phosphate from a donor nucleoside monophosphate to an acceptor nucleoside, preferably inosine, deoxyinosine and guanosine. Has the highest activities for IMP and GMP followed by dIMP, dGMP and XMP. Could also catalyze the transfer of phosphates from pyrimidine monophosphates but with lower efficiency. Through these activities regulates the purine nucleoside/nucleotide pools within the cell. This is Cytosolic purine 5'-nucleotidase (nt5c2) from Xenopus tropicalis (Western clawed frog).